The sequence spans 336 residues: Gastrula zinc finger protein XlCGF57.1 (336 aa).

C2H2-type zinc fingers lie at residues 6-28, 34-56, 62-84, 90-112, 118-140, 146-168, 174-196, 202-224, 230-252, 258-280, and 286-308; these read YTCTECGKGFIKKSRLVTHMKIH, FICTECGKGFSQKGILQTHMKTH, FTCTECGKNFAQITTLLRHLTIH, FSCTECGKHFAHKGHLVSHMKTH, FTCTECGKHFAQKGHLVSHMKTH, FTCTECGKNFAQKTNLLCHLKIH, FTCTECGDKFAKKNNLLRHLKIH, FTCTECGKAFTLKGSLVGHMKIH, FSCTQCGKNFTQKNSLLCHLTMH, FTCTECGKGFALKGNLVLHTKIH, and FSCTQCGKNFAQKNSLLRHLKIH.

The protein belongs to the krueppel C2H2-type zinc-finger protein family.

Its subcellular location is the nucleus. May be involved in transcriptional regulation. This chain is Gastrula zinc finger protein XlCGF57.1, found in Xenopus laevis (African clawed frog).